Reading from the N-terminus, the 210-residue chain is RNA chaperone ProQ (210 aa).

Positions 98–127 are enriched in basic and acidic residues; that stretch reads HAKASLEESKAKVAARRKEQAKKAREEAKA. The disordered stretch occupies residues 98-155; the sequence is HAKASLEESKAKVAARRKEQAKKAREEAKAKKPARATTPPKRRPQPAAVAKKQEKPVE.

The protein belongs to the ProQ family.

It is found in the cytoplasm. Its function is as follows. RNA chaperone with significant RNA binding, RNA strand exchange and RNA duplexing activities. The chain is RNA chaperone ProQ from Aliivibrio salmonicida (strain LFI1238) (Vibrio salmonicida (strain LFI1238)).